Here is a 708-residue protein sequence, read N- to C-terminus: Fatty acid oxidation complex subunit alpha (708 aa).

Residues 1 to 191 are enoyl-CoA hydratase; it reads MDNNNAFQLS…KLGVVDACVP (191 aa). Residues 311–708 are 3-hydroxyacyl-CoA dehydrogenase; it reads APVAAVGVLG…RAGLGEKFYP (398 aa).

It in the N-terminal section; belongs to the enoyl-CoA hydratase/isomerase family. In the central section; belongs to the 3-hydroxyacyl-CoA dehydrogenase family. As to quaternary structure, heterotetramer of two alpha chains (FadJ) and two beta chains (FadI).

The protein resides in the cytoplasm. It carries out the reaction a (3S)-3-hydroxyacyl-CoA = a (2E)-enoyl-CoA + H2O. The enzyme catalyses a 4-saturated-(3S)-3-hydroxyacyl-CoA = a (3E)-enoyl-CoA + H2O. It catalyses the reaction a (3S)-3-hydroxyacyl-CoA + NAD(+) = a 3-oxoacyl-CoA + NADH + H(+). The catalysed reaction is (3S)-3-hydroxybutanoyl-CoA = (3R)-3-hydroxybutanoyl-CoA. The protein operates within lipid metabolism; fatty acid beta-oxidation. Functionally, catalyzes the formation of a hydroxyacyl-CoA by addition of water on enoyl-CoA. Also exhibits 3-hydroxyacyl-CoA epimerase and 3-hydroxyacyl-CoA dehydrogenase activities. This chain is Fatty acid oxidation complex subunit alpha, found in Vibrio cholerae serotype O1 (strain ATCC 39315 / El Tor Inaba N16961).